Here is a 175-residue protein sequence, read N- to C-terminus: Protein-export protein SecB (175 aa).

The interval 154 to 175 (QQGGNNNGSDSGIILPPGTTRQ) is disordered.

The protein belongs to the SecB family. In terms of assembly, homotetramer, a dimer of dimers. One homotetramer interacts with 1 SecA dimer.

The protein resides in the cytoplasm. Functionally, one of the proteins required for the normal export of preproteins out of the cell cytoplasm. It is a molecular chaperone that binds to a subset of precursor proteins, maintaining them in a translocation-competent state. It also specifically binds to its receptor SecA. This is Protein-export protein SecB from Bordetella petrii (strain ATCC BAA-461 / DSM 12804 / CCUG 43448).